The chain runs to 38 residues: Natriuretic peptide DNP (38 aa).

C7 and C23 are oxidised to a cystine. The segment at 19-38 (SNLGCPSLRDPRPNAPSTSA) is disordered.

It belongs to the natriuretic peptide family. As to expression, expressed by the venom gland.

It localises to the secreted. Its function is as follows. Exhibits vasodilator, natriuretic and diuretic properties in animal models and human tissues. Acts by stimulating cGMP via the natriuretic peptide receptor 1 (NPR1). Is a poor agonist of the atrial natriuretic peptide receptor 2 (NPR2). Is not degraded by neutral endopeptidase (NEP/MME). Binds to atrial natriuretic peptide clearance receptor (NPR-C/NPR3), which may be responsible of the removal of DNP from the circulation. Increases calcium uptake and induces histamine release from rat peritoneal mast cells. Increases calcium-activated potassium (KCa) current in gastric antral circular smooth muscle cells by increasing cGMP production and activating inositol trisphosphate receptors (IP3Rs). In vivo, reduces both systolic and diastolic blood pressure with no effect on heart rate, when intravenously injected in conscious rabbits. The sequence is that of Natriuretic peptide DNP from Dendroaspis angusticeps (Eastern green mamba).